A 273-amino-acid polypeptide reads, in one-letter code: NH(3)-dependent NAD(+) synthetase (273 aa).

47 to 54 (GISGGQDS) is a binding site for ATP. Residue D53 coordinates Mg(2+). R139 contributes to the deamido-NAD(+) binding site. ATP is bound at residue T159. E164 provides a ligand contact to Mg(2+). Deamido-NAD(+) contacts are provided by K172 and D179. K188 and T210 together coordinate ATP. Residue 259 to 260 (HK) participates in deamido-NAD(+) binding.

It belongs to the NAD synthetase family. In terms of assembly, homodimer.

It catalyses the reaction deamido-NAD(+) + NH4(+) + ATP = AMP + diphosphate + NAD(+) + H(+). It participates in cofactor biosynthesis; NAD(+) biosynthesis; NAD(+) from deamido-NAD(+) (ammonia route): step 1/1. Catalyzes the ATP-dependent amidation of deamido-NAD to form NAD. Uses ammonia as a nitrogen source. This is NH(3)-dependent NAD(+) synthetase from Staphylococcus haemolyticus (strain JCSC1435).